Here is a 96-residue protein sequence, read N- to C-terminus: Small ribosomal subunit protein bS6c (96 aa).

The protein belongs to the bacterial ribosomal protein bS6 family.

The protein resides in the plastid. It is found in the chloroplast. Functionally, binds together with bS18 to 16S ribosomal RNA. The polypeptide is Small ribosomal subunit protein bS6c (rps6) (Trieres chinensis (Marine centric diatom)).